The sequence spans 233 residues: Small ribosomal subunit protein uS2c (233 aa).

Belongs to the universal ribosomal protein uS2 family.

It localises to the plastid. It is found in the cyanelle. This chain is Small ribosomal subunit protein uS2c (rps2), found in Cyanophora paradoxa.